We begin with the raw amino-acid sequence, 551 residues long: Cytochrome c oxidase subunit 1 (551 aa).

The helical transmembrane segment at 29 to 49 (VIGIQYLVTSFLFFFIGGSFA) threads the bilayer. His76 contacts Fe(II)-heme a. The next 11 membrane-spanning stretches (helical) occupy residues 79-99 (IMIFLWIVPAGAAFANYLIPL), 113-133 (AVAFWLTPPGGILLISSFFVG), 156-176 (LWILSLLLVGTSSILGAINFV), 205-225 (LILLSTPVLASALILLSFDLI), 245-265 (LFWFYSHPAVYIMILPFFGVI), 283-303 (IAYSSLAISFLGLIVWAHHMF), 313-333 (MFFMATTMLIAVPTGIKIFSW), 348-368 (MLFAFGFLSSFMIGGLTGVMV), 382-402 (FVVGHFHYVLFGGSAFALFSG), 424-444 (FILTFIGMNLTFMPMHELGLM), and 466-486 (IGAYVLAASTIPFVINVFWSL). Residues His251, Tyr255, His300, and His301 each coordinate Cu cation. Residues 251 to 255 (HPAVY) constitute a cross-link (1'-histidyl-3'-tyrosine (His-Tyr)). Residue His386 coordinates heme a3. His388 provides a ligand contact to Fe(II)-heme a.

The protein belongs to the heme-copper respiratory oxidase family. Cu(2+) is required as a cofactor. The cofactor is heme.

The protein localises to the cell membrane. It carries out the reaction 4 Fe(II)-[cytochrome c] + O2 + 8 H(+)(in) = 4 Fe(III)-[cytochrome c] + 2 H2O + 4 H(+)(out). It functions in the pathway energy metabolism; oxidative phosphorylation. Cytochrome c oxidase is the component of the respiratory chain that catalyzes the reduction of oxygen to water. Subunits 1-3 form the functional core of the enzyme complex. CO I is the catalytic subunit of the enzyme. Electrons originating in cytochrome c are transferred via the copper A center of subunit 2 and heme A of subunit 1 to the bimetallic center formed by heme A3 and copper B. The protein is Cytochrome c oxidase subunit 1 (ctaD) of Synechocystis sp. (strain ATCC 27184 / PCC 6803 / Kazusa).